The chain runs to 67 residues: uncharacterized protein (67 aa).

A run of 2 helical transmembrane segments spans residues 10-30 (EFFI…ITMW) and 40-60 (LMVG…WMVF).

This sequence belongs to the plectrovirus ORF10 family.

It is found in the host membrane. This is an uncharacterized protein from Spiroplasma citri (SpV1).